The sequence spans 80 residues: Putative membrane protein insertion efficiency factor (80 aa).

Belongs to the UPF0161 family.

It is found in the cell membrane. Could be involved in insertion of integral membrane proteins into the membrane. This is Putative membrane protein insertion efficiency factor from Shouchella clausii (strain KSM-K16) (Alkalihalobacillus clausii).